The following is an 877-amino-acid chain: DNA mismatch repair protein MutS (877 aa).

627 to 634 (GPNMAGKS) contributes to the ATP binding site.

The protein belongs to the DNA mismatch repair MutS family.

Its function is as follows. This protein is involved in the repair of mismatches in DNA. It is possible that it carries out the mismatch recognition step. This protein has a weak ATPase activity. The polypeptide is DNA mismatch repair protein MutS (Dinoroseobacter shibae (strain DSM 16493 / NCIMB 14021 / DFL 12)).